The sequence spans 79 residues: Small cysteine-rich protein 2 (79 aa).

An N-terminal signal peptide occupies residues 1–21 (MRSQHVLILLLGLVCASQVLG). Positions 22–35 (KHLTKVKAKALHYD) are excised as a propeptide.

Belongs to the Cnidaria small cysteine-rich protein (SCRiP) family. delta subfamily. In terms of processing, contains 4 disulfide bonds.

The protein resides in the secreted. Its subcellular location is the nematocyst. Its function is as follows. This recombinant protein induces severe neurotoxicity on zebrafish larvae (Danio rerio) at a concentration of 230 mg/ml, but does not show toxicity when injected in blowfly larvae (Sarcophaga falculata). All fish incubated with this protein died within 200 minutes of exposure. Has also been claimed to be implied in calcification, but this function seems improbable. The sequence is that of Small cysteine-rich protein 2 from Acropora millepora (Staghorn coral).